The chain runs to 363 residues: MSKKNNLLVAASGTGGHIFPALAVSKEVEDEWNIHWLGVRQRLDANFIPKKYNLRTLNIKTPRKNIFLFYQYIEILISTFQIIRILKEKKINLVFTTGGYISAPTIVASKLLRIPIIIHESNVIPGMVTKYFGFLCNYVLLGFKKTNSYLKNCKTIFTGTPLREQFYKFNFLPEWVPKGRGPLLIVMGGSQGAKAINQILYESLEFLIKKQFRIVHIIGESNQQPFHVKNSKNYIQKKFTNEIAALIQNCDLVISRSGAGTINELIEAEKPSILIPYPDSKNNHQEKNALILAESGGSVLINQNKISKEVFEETLERIFKIKSKKGKNHYEILDLMKKNMENNNKIKSNNEIKKFINYFLKEF.

UDP-N-acetyl-alpha-D-glucosamine contacts are provided by residues threonine 14–glycine 16, asparagine 122, arginine 163, serine 190, and glutamine 285.

This sequence belongs to the glycosyltransferase 28 family. MurG subfamily.

The protein resides in the cell inner membrane. The catalysed reaction is di-trans,octa-cis-undecaprenyl diphospho-N-acetyl-alpha-D-muramoyl-L-alanyl-D-glutamyl-meso-2,6-diaminopimeloyl-D-alanyl-D-alanine + UDP-N-acetyl-alpha-D-glucosamine = di-trans,octa-cis-undecaprenyl diphospho-[N-acetyl-alpha-D-glucosaminyl-(1-&gt;4)]-N-acetyl-alpha-D-muramoyl-L-alanyl-D-glutamyl-meso-2,6-diaminopimeloyl-D-alanyl-D-alanine + UDP + H(+). It functions in the pathway cell wall biogenesis; peptidoglycan biosynthesis. In terms of biological role, cell wall formation. Catalyzes the transfer of a GlcNAc subunit on undecaprenyl-pyrophosphoryl-MurNAc-pentapeptide (lipid intermediate I) to form undecaprenyl-pyrophosphoryl-MurNAc-(pentapeptide)GlcNAc (lipid intermediate II). This Prochlorococcus marinus (strain MIT 9312) protein is UDP-N-acetylglucosamine--N-acetylmuramyl-(pentapeptide) pyrophosphoryl-undecaprenol N-acetylglucosamine transferase.